The primary structure comprises 359 residues: Heme A synthase (359 aa).

The next 6 helical transmembrane spans lie at 23–43, 85–105, 109–129, 137–157, 172–192, and 212–232; these read AVAFWLWSLAVLVFLMVVLGG, YAALFPDMDLAGFKFIFFFEW, LLGRLIGVATALPLLFFWLRG, LKLLGLLALGGLQGFVGWWMV, LAIHLILASLTFCFIVWLAAS, and AGLILLAILVQIGLGALVAGL. Histidine 276 is a binding site for heme. A run of 3 helical transmembrane segments spans residues 278 to 298, 308 to 328, and 329 to 349; these read MVAYLVLGLTLLQVFWTSGTL, IALLGLVLAQVILGILTLVLV, and VPLWAGLLHQAFAMLVLGMAV. A heme-binding site is contributed by histidine 337.

This sequence belongs to the COX15/CtaA family. Type 2 subfamily. Interacts with CtaB. Heme b is required as a cofactor.

It localises to the cell membrane. It catalyses the reaction Fe(II)-heme o + 2 A + H2O = Fe(II)-heme a + 2 AH2. The protein operates within porphyrin-containing compound metabolism; heme A biosynthesis; heme A from heme O: step 1/1. Catalyzes the conversion of heme O to heme A by two successive hydroxylations of the methyl group at C8. The first hydroxylation forms heme I, the second hydroxylation results in an unstable dihydroxymethyl group, which spontaneously dehydrates, resulting in the formyl group of heme A. This Beijerinckia indica subsp. indica (strain ATCC 9039 / DSM 1715 / NCIMB 8712) protein is Heme A synthase.